Here is a 150-residue protein sequence, read N- to C-terminus: D-aminoacyl-tRNA deacylase (150 aa).

The short motif at 138 to 139 (GP) is the Gly-cisPro motif, important for rejection of L-amino acids element.

Belongs to the DTD family. Homodimer.

It is found in the cytoplasm. It carries out the reaction glycyl-tRNA(Ala) + H2O = tRNA(Ala) + glycine + H(+). It catalyses the reaction a D-aminoacyl-tRNA + H2O = a tRNA + a D-alpha-amino acid + H(+). An aminoacyl-tRNA editing enzyme that deacylates mischarged D-aminoacyl-tRNAs. Also deacylates mischarged glycyl-tRNA(Ala), protecting cells against glycine mischarging by AlaRS. Acts via tRNA-based rather than protein-based catalysis; rejects L-amino acids rather than detecting D-amino acids in the active site. By recycling D-aminoacyl-tRNA to D-amino acids and free tRNA molecules, this enzyme counteracts the toxicity associated with the formation of D-aminoacyl-tRNA entities in vivo and helps enforce protein L-homochirality. This chain is D-aminoacyl-tRNA deacylase, found in Chlorobaculum tepidum (strain ATCC 49652 / DSM 12025 / NBRC 103806 / TLS) (Chlorobium tepidum).